Reading from the N-terminus, the 505-residue chain is uncharacterized protein (505 aa).

Residues 461-480 (RTDVHPGNSDDEGAYSSADS) form a disordered region.

It to M.jannaschii MJ0787.

This is an uncharacterized protein from Methanothermobacter thermautotrophicus (strain ATCC 29096 / DSM 1053 / JCM 10044 / NBRC 100330 / Delta H) (Methanobacterium thermoautotrophicum).